We begin with the raw amino-acid sequence, 384 residues long: Glycine-rich cell wall structural protein 1 (384 aa).

The first 27 residues, 1–27 (MGSSQKWVIGLLLFSSIFFELTAITLA), serve as a signal peptide directing secretion.

It is found in the secreted. It localises to the cell wall. Functionally, responsible for plasticity of the cell wall. The protein is Glycine-rich cell wall structural protein 1 (GRP-1) of Petunia hybrida (Petunia).